The sequence spans 352 residues: GTPase Obg (352 aa).

The region spanning 1-159 is the Obg domain; sequence MHFLDQAKIF…MYVWLRLKLL (159 aa). Residues 122-142 form a disordered region; sequence DGGRGNASYKTSTNRAPRQHG. In terms of domain architecture, OBG-type G spans 160–328; the sequence is ADAGLVGLPN…LLDAVLEYLP (169 aa). GTP is bound by residues 166–173, 191–195, 212–215, 280–283, and 309–311; these read GLPNAGKS, FTTLR, DIPG, NKID, and SGA. Mg(2+)-binding residues include S173 and T193.

This sequence belongs to the TRAFAC class OBG-HflX-like GTPase superfamily. OBG GTPase family. Monomer. Requires Mg(2+) as cofactor.

It is found in the cytoplasm. Its function is as follows. An essential GTPase which binds GTP, GDP and possibly (p)ppGpp with moderate affinity, with high nucleotide exchange rates and a fairly low GTP hydrolysis rate. Plays a role in control of the cell cycle, stress response, ribosome biogenesis and in those bacteria that undergo differentiation, in morphogenesis control. This chain is GTPase Obg, found in Novosphingobium aromaticivorans (strain ATCC 700278 / DSM 12444 / CCUG 56034 / CIP 105152 / NBRC 16084 / F199).